We begin with the raw amino-acid sequence, 257 residues long: UPF0246 protein ASA_3634 (257 aa).

It belongs to the UPF0246 family.

The polypeptide is UPF0246 protein ASA_3634 (Aeromonas salmonicida (strain A449)).